The chain runs to 136 residues: MARMAVLWRKMRDNFQSKEFREYVSSTHFWGPAFSWGLPLAAFKDMKASPEIISGRMTTALILYSAIFMRFAYRVQPRNLLLMACHCTNVMAQSVQASRYLLYYYGGGGAEAKARDPPATAAAATSPGSQPPKQAS.

Residues A2–E19 lie on the Mitochondrial matrix side of the membrane. A helical transmembrane segment spans residues F20 to A42. The Mother cell cytoplasmic portion of the chain corresponds to F43–E51. The helical transmembrane segment at I52–R74 threads the bilayer. Residues V75 to S136 lie on the Mitochondrial matrix side of the membrane. A disordered region spans residues E111–S136. Positions P117–S136 are enriched in low complexity.

The protein belongs to the mitochondrial pyruvate carrier (MPC) (TC 2.A.105) family.

The protein resides in the mitochondrion inner membrane. The enzyme catalyses pyruvate(out) + H(+)(out) = pyruvate(in) + H(+)(in). In terms of biological role, mediates the uptake of pyruvate into mitochondria. In Homo sapiens (Human), this protein is Mitochondrial pyruvate carrier 1-like protein (MPC1L).